A 319-amino-acid polypeptide reads, in one-letter code: Myoblast determination protein 1 (319 aa).

Met-1 participates in a covalent cross-link: Peptide (Met-Gly) (interchain with G-Cter in ubiquitin). The residue at position 104 (Lys-104) is an N6-methyllysine; by EHMT2. In terms of domain architecture, bHLH spans 109–160 (DRRKAATMRERRRLSKVNEAFETLKRCTSSNPNQRLPKVEILRNAIRYIEGL). Disordered stretches follow at residues 174 to 222 (AAAA…GARR) and 267 to 319 (PALL…YQVL). Positions 197-207 (SDASSPRSNCS) are enriched in polar residues. The segment covering 267 to 276 (PALLLADAPP) has biased composition (low complexity).

In terms of assembly, efficient DNA binding requires dimerization with another bHLH protein. Seems to form active heterodimers with ITF-2. Interacts with SUV39H1. Interacts with DDX5. Interacts with CHD2. Interacts with TSC22D3. Interacts with SETD3. Interacts with P-TEFB complex; promotes the transcriptional activity of MYOD1 through its CDK9-mediated phosphorylation. Interacts with CSRP3. Interacts with NUPR1. Post-translationally, phosphorylated by CDK9. This phosphorylation promotes its function in muscle differentiation. In terms of processing, acetylated by a complex containing EP300 and PCAF. The acetylation is essential to activate target genes. Conversely, its deacetylation by SIRT1 inhibits its function. Ubiquitinated on the N-terminus; which is required for proteasomal degradation. Post-translationally, methylation at Lys-104 by EHMT2/G9a inhibits myogenic activity.

It localises to the nucleus. In terms of biological role, acts as a transcriptional activator that promotes transcription of muscle-specific target genes and plays a role in muscle differentiation. Together with MYF5 and MYOG, co-occupies muscle-specific gene promoter core region during myogenesis. Induces fibroblasts to differentiate into myoblasts. Interacts with and is inhibited by the twist protein. This interaction probably involves the basic domains of both proteins. This Ovis aries (Sheep) protein is Myoblast determination protein 1 (MYOD1).